A 224-amino-acid polypeptide reads, in one-letter code: Na(+)-translocating NADH-quinone reductase subunit D (224 aa).

The next 5 helical transmembrane spans lie at 43–63 (TVMAIALTLVTGFSNLFISMI), 67–87 (IPSSIRMIVQMVIIASLVIVV), 104–124 (VFVGLIITNCIVMGRAEAFAM), 132–152 (FFDGIGNGLGYSAMLLVLGFV), and 179–199 (NGLLLLPPSAFFLIGLIIWAL).

Belongs to the NqrDE/RnfAE family. In terms of assembly, composed of six subunits; NqrA, NqrB, NqrC, NqrD, NqrE and NqrF.

It localises to the cell inner membrane. The enzyme catalyses a ubiquinone + n Na(+)(in) + NADH + H(+) = a ubiquinol + n Na(+)(out) + NAD(+). Its function is as follows. NQR complex catalyzes the reduction of ubiquinone-1 to ubiquinol by two successive reactions, coupled with the transport of Na(+) ions from the cytoplasm to the periplasm. NqrA to NqrE are probably involved in the second step, the conversion of ubisemiquinone to ubiquinol. This is Na(+)-translocating NADH-quinone reductase subunit D from Pseudomonas aeruginosa (strain LESB58).